The following is a 282-amino-acid chain: tRNA (guanine-N(7)-)-methyltransferase (282 aa).

Positions 1–36 are disordered; that stretch reads MAGPPNKKQKREDYRTARENGEESKELPKKKFYRQR. A compositionally biased stretch (basic and acidic residues) spans 10–29; it reads KREDYRTARENGEESKELPK. Residues glycine 100, 123-124, 158-159, and cysteine 178 each bind S-adenosyl-L-methionine; these read EI and NT. The active site involves aspartate 181. Residue 256 to 258 participates in S-adenosyl-L-methionine binding; that stretch reads TEE.

Belongs to the class I-like SAM-binding methyltransferase superfamily. TrmB family. As to quaternary structure, forms a complex with trm82.

It is found in the nucleus. The enzyme catalyses guanosine(46) in tRNA + S-adenosyl-L-methionine = N(7)-methylguanosine(46) in tRNA + S-adenosyl-L-homocysteine. The protein operates within tRNA modification; N(7)-methylguanine-tRNA biosynthesis. In terms of biological role, catalyzes the formation of N(7)-methylguanine at position 46 (m7G46) in tRNA. In Botryotinia fuckeliana (strain B05.10) (Noble rot fungus), this protein is tRNA (guanine-N(7)-)-methyltransferase (trm8).